Reading from the N-terminus, the 70-residue chain is Putative membrane protein insertion efficiency factor (70 aa).

The protein belongs to the UPF0161 family.

It is found in the cell inner membrane. Could be involved in insertion of integral membrane proteins into the membrane. The chain is Putative membrane protein insertion efficiency factor from Francisella tularensis subsp. tularensis (strain SCHU S4 / Schu 4).